Reading from the N-terminus, the 525-residue chain is Probable malate:quinone oxidoreductase (525 aa).

The protein belongs to the MQO family. It depends on FAD as a cofactor.

It carries out the reaction (S)-malate + a quinone = a quinol + oxaloacetate. The protein operates within carbohydrate metabolism; tricarboxylic acid cycle; oxaloacetate from (S)-malate (quinone route): step 1/1. This Serratia proteamaculans (strain 568) protein is Probable malate:quinone oxidoreductase.